A 133-amino-acid chain; its full sequence is Ribosome-binding factor A (133 aa).

Belongs to the RbfA family. As to quaternary structure, monomer. Binds 30S ribosomal subunits, but not 50S ribosomal subunits or 70S ribosomes.

The protein localises to the cytoplasm. One of several proteins that assist in the late maturation steps of the functional core of the 30S ribosomal subunit. Associates with free 30S ribosomal subunits (but not with 30S subunits that are part of 70S ribosomes or polysomes). Required for efficient processing of 16S rRNA. May interact with the 5'-terminal helix region of 16S rRNA. The chain is Ribosome-binding factor A from Salmonella schwarzengrund (strain CVM19633).